Reading from the N-terminus, the 155-residue chain is 3-hydroxyacyl-[acyl-carrier-protein] dehydratase FabZ (155 aa).

The active site involves histidine 58.

It belongs to the thioester dehydratase family. FabZ subfamily.

It is found in the cytoplasm. It catalyses the reaction a (3R)-hydroxyacyl-[ACP] = a (2E)-enoyl-[ACP] + H2O. In terms of biological role, involved in unsaturated fatty acids biosynthesis. Catalyzes the dehydration of short chain beta-hydroxyacyl-ACPs and long chain saturated and unsaturated beta-hydroxyacyl-ACPs. This is 3-hydroxyacyl-[acyl-carrier-protein] dehydratase FabZ from Rhizobium etli (strain ATCC 51251 / DSM 11541 / JCM 21823 / NBRC 15573 / CFN 42).